The sequence spans 563 residues: Chaperonin GroEL 1 (563 aa).

Residues 29–32, 86–90, Gly413, and Asp492 contribute to the ATP site; these read TIGP and DGTTT. The disordered stretch occupies residues 520 to 541; the sequence is DKPEPPSAPGAEGGDPMGGMGG. Positions 530-541 are enriched in gly residues; it reads AEGGDPMGGMGG.

The protein belongs to the chaperonin (HSP60) family. In terms of assembly, forms a cylinder of 14 subunits composed of two heptameric rings stacked back-to-back. Interacts with the co-chaperonin GroES.

Its subcellular location is the cytoplasm. The enzyme catalyses ATP + H2O + a folded polypeptide = ADP + phosphate + an unfolded polypeptide.. Functionally, together with its co-chaperonin GroES, plays an essential role in assisting protein folding. The GroEL-GroES system forms a nano-cage that allows encapsulation of the non-native substrate proteins and provides a physical environment optimized to promote and accelerate protein folding. The chain is Chaperonin GroEL 1 from Prochlorococcus marinus (strain NATL1A).